We begin with the raw amino-acid sequence, 855 residues long: Vomeronasal type-2 receptor 26 (855 aa).

A signal peptide spans 1 to 22 (MKLLTAFSPLVVLILFQEQISC). Residues 23 to 595 (YYLTKYASSG…FLAHEDPLGT (573 aa)) lie on the Extracellular side of the membrane. N-linked (GlcNAc...) asparagine glycans are attached at residues Asn101 and Asn295. The chain crosses the membrane as a helical span at residues 596 to 616 (VLVSLAISLSAFSAMILGLFI). Residues 617–630 (CYRETPIVRANNRN) lie on the Cytoplasmic side of the membrane. A helical membrane pass occupies residues 631–651 (LSYLLLISLKLCFSCSLMFIG). The Extracellular portion of the chain corresponds to 652-662 (QPRTVTCVLRQ). Residues 663–683 (IIFGIVFSIVISAILAKTFIV) traverse the membrane as a helical segment. Residues 684 to 706 (VMAFKAIKPGSILKMGMVTRLSN) lie on the Cytoplasmic side of the membrane. Residues 707–727 (AIVCCGSIIQVCICAVWLGTY) traverse the membrane as a helical segment. Residues 728–753 (PPFPDVDMHSEFGQIILWCNEGSTLA) lie on the Extracellular side of the membrane. A helical transmembrane segment spans residues 754-774 (FYCVLGYLGFLASLSLLIAFL). At 775 to 786 (ARRLPDSFNEAK) the chain is on the cytoplasmic side. The chain crosses the membrane as a helical span at residues 787 to 807 (TITFSMLVFCSVWISFVPAYL). Residues 808–814 (SSKGKTM) are Extracellular-facing. Residues 815–835 (VAVEILSILASSAGLLGCIFL) form a helical membrane-spanning segment. At 836-855 (PKCYVILLKSGGHSRKKFFK) the chain is on the cytoplasmic side.

It belongs to the G-protein coupled receptor 3 family. As to expression, expressed in the basal epithelium of the vomeronasal organ. Located to vomeronasal sensory neurons that project their axons to six to ten glomeruli that reside in globally conserved areas within the caudal accessory olfactory bulb (AOB).

It localises to the cell membrane. Putative pheromone receptor. In Mus musculus (Mouse), this protein is Vomeronasal type-2 receptor 26 (Vmn2r26).